Consider the following 656-residue polypeptide: Vi polysaccharide export protein VexE (656 aa).

Its function is as follows. May be involved in translocation of the Vi antigen. This Salmonella typhi protein is Vi polysaccharide export protein VexE (vexE).